The primary structure comprises 184 residues: NADH-quinone oxidoreductase subunit B (184 aa).

4 residues coordinate [4Fe-4S] cluster: Cys-37, Cys-38, Cys-103, and Cys-132.

This sequence belongs to the complex I 20 kDa subunit family. As to quaternary structure, NDH-1 is composed of 14 different subunits. Subunits NuoB, C, D, E, F, and G constitute the peripheral sector of the complex. The cofactor is [4Fe-4S] cluster.

It localises to the cell membrane. The catalysed reaction is a quinone + NADH + 5 H(+)(in) = a quinol + NAD(+) + 4 H(+)(out). In terms of biological role, NDH-1 shuttles electrons from NADH, via FMN and iron-sulfur (Fe-S) centers, to quinones in the respiratory chain. The immediate electron acceptor for the enzyme in this species is believed to be a menaquinone. Couples the redox reaction to proton translocation (for every two electrons transferred, four hydrogen ions are translocated across the cytoplasmic membrane), and thus conserves the redox energy in a proton gradient. This Mycolicibacterium paratuberculosis (strain ATCC BAA-968 / K-10) (Mycobacterium paratuberculosis) protein is NADH-quinone oxidoreductase subunit B.